Reading from the N-terminus, the 431-residue chain is MAEIKDIHALEVLDSRGNPTVQADVVLASGVRGTACAPSGASTGSREALELRDGDTSRYLGKGVLKAVEAVNGRIRDALVGKDALDQRALDAAMLELDGTDNKAGLGANAILAVSLAAAKAAAIEKGVPLYAHIADLYGQSGQFRMPVPMMNILNGGEHADNNVDIQEFMIQPVGAPSFREALRMGAEIFHALKKVLAARGLSTSVGDEGGFAPNLASNAEALAVIQQAVEKAGYVLGKDVTLALDCASSEFYQDGQYNLSGEGKSYDAAGFVDYLAALCDQYPIVSIEDGMDESDWAGWKALTEKLGDKVQLVGDDLFVTNTRILKRGIDEHIGNSILIKFNQIGSLSETLDAIKMAQDAGFTAVISHRSGETEDTTIADLAVGTSAGQIKTGSLCRSDRVAKYNRLLVIEQELEGQAVYPGLAAIKGQG.

Q167 contributes to the (2R)-2-phosphoglycerate binding site. E209 functions as the Proton donor in the catalytic mechanism. D246, E289, and D316 together coordinate Mg(2+). K341, R370, S371, and K392 together coordinate (2R)-2-phosphoglycerate. Residue K341 is the Proton acceptor of the active site.

This sequence belongs to the enolase family. In terms of assembly, component of the RNA degradosome, a multiprotein complex involved in RNA processing and mRNA degradation. The cofactor is Mg(2+).

It localises to the cytoplasm. The protein resides in the secreted. Its subcellular location is the cell surface. The catalysed reaction is (2R)-2-phosphoglycerate = phosphoenolpyruvate + H2O. The protein operates within carbohydrate degradation; glycolysis; pyruvate from D-glyceraldehyde 3-phosphate: step 4/5. Functionally, catalyzes the reversible conversion of 2-phosphoglycerate (2-PG) into phosphoenolpyruvate (PEP). It is essential for the degradation of carbohydrates via glycolysis. This Chromohalobacter salexigens (strain ATCC BAA-138 / DSM 3043 / CIP 106854 / NCIMB 13768 / 1H11) protein is Enolase.